The sequence spans 473 residues: Tryptophanase (473 aa).

Lysine 270 bears the N6-(pyridoxal phosphate)lysine mark.

Belongs to the beta-eliminating lyase family. Homotetramer. Pyridoxal 5'-phosphate is required as a cofactor.

It catalyses the reaction L-tryptophan + H2O = indole + pyruvate + NH4(+). The protein operates within amino-acid degradation; L-tryptophan degradation via pyruvate pathway; indole and pyruvate from L-tryptophan: step 1/1. This Vibrio vulnificus (strain CMCP6) protein is Tryptophanase.